A 208-amino-acid polypeptide reads, in one-letter code: Probable GTP-binding protein EngB (208 aa).

Positions 23–205 constitute an EngB-type G domain; that stretch reads LTSEMVVLGR…RQTLLKYLLT (183 aa). Residues 31–38, 57–61, 84–87, 154–157, and 182–184 each bind GTP; these read GRSNVGKS, GKTRL, DLPG, TKFD, and FNA. Mg(2+)-binding residues include Ser-38 and Thr-59.

It belongs to the TRAFAC class TrmE-Era-EngA-EngB-Septin-like GTPase superfamily. EngB GTPase family. Requires Mg(2+) as cofactor.

Functionally, necessary for normal cell division and for the maintenance of normal septation. This chain is Probable GTP-binding protein EngB, found in Helicobacter acinonychis (strain Sheeba).